Here is a 516-residue protein sequence, read N- to C-terminus: Delta(24)-sterol reductase (516 aa).

An N-terminal signal peptide occupies residues 1-22 (MEPAVSLAVCALLFLLWVRVKG). The Lumenal segment spans residues 23-31 (LEFVLIHQR). The helical transmembrane segment at 32-52 (WVFVCLFLLPLSLIFDIYYYV) threads the bilayer. At 53 to 516 (RAWVVFKLSS…YDKICKAARH (464 aa)) the chain is on the cytoplasmic side. An FAD-binding PCMH-type domain is found at 58–234 (FKLSSAPRLH…VAAEIRIIPA (177 aa)). 163-175 (TVGGLIMGTGIES) contributes to the FAD binding site.

It belongs to the FAD-binding oxidoreductase/transferase type 4 family. FAD is required as a cofactor.

The protein resides in the endoplasmic reticulum membrane. It is found in the golgi apparatus membrane. The enzyme catalyses 5alpha-cholest-8-en-3beta-ol + NADP(+) = zymosterol + NADPH + H(+). It catalyses the reaction cholesterol + NADP(+) = desmosterol + NADPH + H(+). The catalysed reaction is lanosterol + NADPH + H(+) = 24,25-dihydrolanosterol + NADP(+). The protein operates within steroid biosynthesis; cholesterol biosynthesis. In terms of biological role, catalyzes the reduction of the delta-24 double bond of sterol intermediates during cholesterol biosynthesis. In addition to its cholesterol-synthesizing activity, can protect cells from oxidative stress by reducing caspase 3 activity during apoptosis induced by oxidative stress. Also protects against amyloid-beta peptide-induced apoptosis. The sequence is that of Delta(24)-sterol reductase (Dhcr24) from Mus musculus (Mouse).